Consider the following 152-residue polypeptide: UPF0756 membrane protein Daud_1310 (152 aa).

4 helical membrane passes run 14-34, 51-71, 76-96, and 112-132; these read LVGV…LLFI, LELG…NGKI, IIYN…ALAT, and IIFG…GMPV.

Belongs to the UPF0756 family.

The protein resides in the cell membrane. In Desulforudis audaxviator (strain MP104C), this protein is UPF0756 membrane protein Daud_1310.